The chain runs to 67 residues: Large ribosomal subunit protein bL32 (67 aa).

Residues 1–19 (MAVPKRKMSRSNTRSRRSQ) are compositionally biased toward basic residues. The tract at residues 1-22 (MAVPKRKMSRSNTRSRRSQWKA) is disordered.

Belongs to the bacterial ribosomal protein bL32 family.

The sequence is that of Large ribosomal subunit protein bL32 from Kineococcus radiotolerans (strain ATCC BAA-149 / DSM 14245 / SRS30216).